We begin with the raw amino-acid sequence, 301 residues long: Acetylglutamate kinase (301 aa).

Residues 72–73, Arg94, and Asn199 contribute to the substrate site; that span reads GG.

This sequence belongs to the acetylglutamate kinase family. ArgB subfamily.

The protein localises to the cytoplasm. It carries out the reaction N-acetyl-L-glutamate + ATP = N-acetyl-L-glutamyl 5-phosphate + ADP. Its pathway is amino-acid biosynthesis; L-arginine biosynthesis; N(2)-acetyl-L-ornithine from L-glutamate: step 2/4. Functionally, catalyzes the ATP-dependent phosphorylation of N-acetyl-L-glutamate. The chain is Acetylglutamate kinase from Bartonella quintana (strain Toulouse) (Rochalimaea quintana).